The sequence spans 172 residues: uncharacterized protein (172 aa).

Residues 147-159 (AGSGSGSGSGSGS) show a composition bias toward gly residues. The interval 147–172 (AGSGSGSGSGSGSDTGPFKKSQYKIL) is disordered.

This is an uncharacterized protein from Homo sapiens (Human).